We begin with the raw amino-acid sequence, 381 residues long: Neuropeptide Y receptor type 2 (381 aa).

A disordered region spans residues 1–35; it reads MGPIGAEADENQTVEEMKVEQYGPQTTPRGELVPD. The Extracellular segment spans residues 1–51; the sequence is MGPIGAEADENQTVEEMKVEQYGPQTTPRGELVPDPEPELIDSTKLIEVQV. N-linked (GlcNAc...) asparagine glycosylation is present at asparagine 11. Residues 52–72 form a helical membrane-spanning segment; the sequence is VLILAYCSIILLGVIGNSLVI. Residues 73 to 86 lie on the Cytoplasmic side of the membrane; that stretch reads HVVIKFKSMRTVTN. Residues 87 to 107 form a helical membrane-spanning segment; the sequence is FFIANLAVADLLVNTLCLPFT. Residues 108 to 124 lie on the Extracellular side of the membrane; the sequence is LTYTLMGEWKMGPVLCH. Residues cysteine 123 and cysteine 203 are joined by a disulfide bond. Residues 125–145 traverse the membrane as a helical segment; sequence LVPYAQGLAVQVSTITLTVIA. The Cytoplasmic segment spans residues 146–165; the sequence is LDRHRCIVYHLESKISKRIS. A helical transmembrane segment spans residues 166–186; that stretch reads FLIIGLAWGISALLASPLAIF. At 187-216 the chain is on the extracellular side; the sequence is REYSLIEIIPDFEIVACTEKWPGEEKSIYG. The helical transmembrane segment at 217–237 threads the bilayer; that stretch reads TVYSLSSLLILYVLPLGIISF. The Cytoplasmic segment spans residues 238–268; sequence SYTRIWSKLKNHVSPGAANDHYHQRRQKTTK. Residues 269–289 traverse the membrane as a helical segment; sequence MLVCVVVVFAVSWLPLHAFQL. The Extracellular segment spans residues 290 to 304; it reads AVDIDSQVLDLKEYK. Residues 305 to 325 traverse the membrane as a helical segment; sequence LIFTVFHIIAMCSTFANPLLY. Residues 326 to 381 are Cytoplasmic-facing; the sequence is GWMNSNYRKAFLSAFRCEQRLDAIHSEVSVTFKAKKNLEVRKNSGPNDSFTEATNV. Cysteine 342 carries S-palmitoyl cysteine lipidation.

The protein belongs to the G-protein coupled receptor 1 family. In terms of tissue distribution, high levels in amygdala, corpus callosum, hippocampus and subthalamic nucleus. Also detectable in caudate nucleus, hypothalamus and substantia nigra.

The protein resides in the cell membrane. Receptor for neuropeptide Y and peptide YY. The rank order of affinity of this receptor for pancreatic polypeptides is PYY &gt; NPY &gt; PYY (3-36) &gt; NPY (2-36) &gt; [Ile-31, Gln-34] PP &gt; [Leu-31, Pro-34] NPY &gt; PP, [Pro-34] PYY and NPY free acid. The protein is Neuropeptide Y receptor type 2 (NPY2R) of Homo sapiens (Human).